The sequence spans 993 residues: NACHT, LRR and PYD domains-containing protein 14 (993 aa).

Residues 81–403 (QTVVLQGAAG…FYLLRENLEE (323 aa)) enclose the NACHT domain. 87–94 (GAAGIGKT) is an ATP binding site. LRR repeat units lie at residues 636–657 (DLKE…LKCK), 660–680 (KLRV…QKLS), 688–708 (SLVF…KSLC), 717–738 (SLER…VLSS), 745–765 (RLTH…KLLS), 774–795 (TLQS…HLST), 802–822 (SLVH…KLLC), 831–852 (NLQE…DLAS), and 859–879 (NLWS…NILC).

The protein belongs to the NLRP family. Detected in adult ovary and testis. Detected in oocytes and in germ cell elements in seminiferous tubules in adult testis (at protein level).

It localises to the cytoplasm. In terms of biological role, may be involved in inflammation and spermatogenesis. This Mus musculus (Mouse) protein is NACHT, LRR and PYD domains-containing protein 14 (Nlrp14).